Here is a 232-residue protein sequence, read N- to C-terminus: Large ribosomal subunit protein uL1 (232 aa).

The protein belongs to the universal ribosomal protein uL1 family. In terms of assembly, part of the 50S ribosomal subunit.

In terms of biological role, binds directly to 23S rRNA. The L1 stalk is quite mobile in the ribosome, and is involved in E site tRNA release. Functionally, protein L1 is also a translational repressor protein, it controls the translation of the L11 operon by binding to its mRNA. In Colwellia psychrerythraea (strain 34H / ATCC BAA-681) (Vibrio psychroerythus), this protein is Large ribosomal subunit protein uL1.